Consider the following 673-residue polypeptide: ATP-binding cassette sub-family G member 8 (673 aa).

Over residues 1–11 (MAGKAAEERGL) the composition is skewed to basic and acidic residues. Positions 1-25 (MAGKAAEERGLPKGATPQDTSGLQD) are disordered. The Cytoplasmic portion of the chain corresponds to 1 to 416 (MAGKAAEERG…ISNDFRDLPT (416 aa)). Residues 47 to 313 (LEVRDLNYQV…FTAIGYPCPR (267 aa)) enclose the ABC transporter domain. Residues 411–665 (FRDLPTLLIH…VLYYVSLRFI (255 aa)) enclose the ABC transmembrane type-2 domain. Residues 417–437 (LLIHGAEACLMSMTIGFLYFG) form a helical membrane-spanning segment. The Extracellular segment spans residues 438 to 447 (HGSIQLSFMD). A helical transmembrane segment spans residues 448 to 468 (TAALLFMIGALIPFNVILDVI). The Cytoplasmic segment spans residues 469–497 (SKCYSERAMLYYELEDGLYTTGPYFFAKI). The helical transmembrane segment at 498-518 (LGELPEHCAYIIIYGMPTYWL) threads the bilayer. Residues 519–527 (ANLRPGLQP) are Extracellular-facing. The chain crosses the membrane as a helical span at residues 528–548 (FLLHFLLVWLVVFCCRIMALA). At 549–555 (AAALLPT) the chain is on the cytoplasmic side. A helical membrane pass occupies residues 556–576 (FHMASFFSNALYNSFYLAGGF). At 577–639 (MINLSSLWTV…LSVMELDSYP (63 aa)) the chain is on the extracellular side. N-linked (GlcNAc...) asparagine glycosylation is present at N619. A helical transmembrane segment spans residues 640–660 (LYAIYLIVIGLSGGFMVLYYV). Residues 661–673 (SLRFIKQKPSQDW) lie on the Cytoplasmic side of the membrane.

It belongs to the ABC transporter superfamily. ABCG family. Eye pigment precursor importer (TC 3.A.1.204) subfamily. In terms of assembly, heterodimer with ABCG8. The cofactor is Mg(2+). Post-translationally, N-glycosylated. As to expression, predominantly expressed in the liver. Low expression levels in the small intestine and colon. Very low levels in other tissues, including brain, heart and spleen.

The protein resides in the cell membrane. Its subcellular location is the apical cell membrane. It catalyses the reaction cholesterol(in) + ATP + H2O = cholesterol(out) + ADP + phosphate + H(+). The enzyme catalyses sitosterol(in) + ATP + H2O = sitosterol(out) + ADP + phosphate + H(+). With respect to regulation, the ATPase activity of the heterodimer is stimulated by cholate. Taurocholate, glycocholate, taurochenodeoxycholate, glycochenodeoxycholate and taurodeoxycholate also stimulate ATPase activity, but to a lower degree. Glycodeoxycholate has no significant effect on ATPase activity. ATPase activity is inhibited by vanadate and by berillium fluoride. In terms of biological role, ABCG5 and ABCG8 form an obligate heterodimer that mediates Mg(2+)- and ATP-dependent sterol transport across the cell membrane. Plays an essential role in the selective transport of the dietary cholesterol in and out of the enterocytes and in the selective sterol excretion by the liver into bile. Required for normal sterol homeostasis. The heterodimer with ABCG5 has ATPase activity. The chain is ATP-binding cassette sub-family G member 8 from Homo sapiens (Human).